The sequence spans 168 residues: Small ribosomal subunit protein uS5 (168 aa).

One can recognise an S5 DRBM domain in the interval 17–80 (IEDQLVAVNR…EDGKKKMINV (64 aa)).

This sequence belongs to the universal ribosomal protein uS5 family. In terms of assembly, part of the 30S ribosomal subunit. Contacts proteins S4 and S8.

Its function is as follows. With S4 and S12 plays an important role in translational accuracy. Located at the back of the 30S subunit body where it stabilizes the conformation of the head with respect to the body. In Lactobacillus helveticus (strain DPC 4571), this protein is Small ribosomal subunit protein uS5.